The following is a 335-amino-acid chain: Phosphate acyltransferase (335 aa).

This sequence belongs to the PlsX family. As to quaternary structure, homodimer. Probably interacts with PlsY.

It is found in the cytoplasm. It carries out the reaction a fatty acyl-[ACP] + phosphate = an acyl phosphate + holo-[ACP]. It functions in the pathway lipid metabolism; phospholipid metabolism. Functionally, catalyzes the reversible formation of acyl-phosphate (acyl-PO(4)) from acyl-[acyl-carrier-protein] (acyl-ACP). This enzyme utilizes acyl-ACP as fatty acyl donor, but not acyl-CoA. In Clostridium botulinum (strain Loch Maree / Type A3), this protein is Phosphate acyltransferase.